The primary structure comprises 542 residues: MFSLQKKALQHIYMTPENASELSKDLLQHLGLYWNGPIIKMDTVVHLHNKIFSNRSVLKYALAKQANITIIETLVLWVEPEYALAQALKHNRKDVLECIFSYHLTTPKYHHIMHLTSSQELFEFFHLFICKSKNYHARMECLLYAATLYNFQNILEKNREYIIRHSIGNPLFAIACKERHINLIAWFVTAGVLDTYDDSTLFNTAFKLGDYSLLEVACDLPITYPDYLIISMMQTAIQKNYFRFFKKLLTHFSIYRPIIITDAAYYDRRKILLLLLNQNIFNNFTILCALSAAIKGHASKKTLNLLINRLDSQMTVIDSVYYSIIKYNNIDCIPLLMHIKTFRMETLISIAVHGDNIDIIAACKAFLPKDTLYHLVLKMAIILRNHKLFKLYTEKEHPMYIFTILKAIISDFINYTVFQALAIEYLCKFHQEKQLPIVPLLMVLAEHNYITKFKKTCYAANMSDQKVKRALIKCLFIATQKNYCQIFKYCFGSLLKVLSKHEQEKFFNSVVFAKKLASYYDHQNMIQLIDSLIERFRYLLKA.

This sequence belongs to the asfivirus MGF 505 family.

In terms of biological role, plays a role in virus cell tropism, and may be required for efficient virus replication in macrophages. The polypeptide is Protein MGF 505-11L (African swine fever virus (isolate Tick/Malawi/Lil 20-1/1983) (ASFV)).